A 314-amino-acid chain; its full sequence is Homoserine kinase (314 aa).

Pro-96–Cys-106 is an ATP binding site.

Belongs to the GHMP kinase family. Homoserine kinase subfamily.

Its subcellular location is the cytoplasm. It catalyses the reaction L-homoserine + ATP = O-phospho-L-homoserine + ADP + H(+). It participates in amino-acid biosynthesis; L-threonine biosynthesis; L-threonine from L-aspartate: step 4/5. Its function is as follows. Catalyzes the ATP-dependent phosphorylation of L-homoserine to L-homoserine phosphate. In Haemophilus influenzae (strain 86-028NP), this protein is Homoserine kinase.